Consider the following 236-residue polypeptide: 2-C-methyl-D-erythritol 4-phosphate cytidylyltransferase (236 aa).

The protein belongs to the IspD/TarI cytidylyltransferase family. IspD subfamily.

It carries out the reaction 2-C-methyl-D-erythritol 4-phosphate + CTP + H(+) = 4-CDP-2-C-methyl-D-erythritol + diphosphate. It functions in the pathway isoprenoid biosynthesis; isopentenyl diphosphate biosynthesis via DXP pathway; isopentenyl diphosphate from 1-deoxy-D-xylulose 5-phosphate: step 2/6. Catalyzes the formation of 4-diphosphocytidyl-2-C-methyl-D-erythritol from CTP and 2-C-methyl-D-erythritol 4-phosphate (MEP). In Burkholderia pseudomallei (strain 1106a), this protein is 2-C-methyl-D-erythritol 4-phosphate cytidylyltransferase.